Here is a 372-residue protein sequence, read N- to C-terminus: Ligninase LG3 (372 aa).

An N-terminal signal peptide occupies residues 1 to 21 (MAFKQLFAAISLALSLSAANA). The propeptide occupies 22-28 (AAVIEKR). 2 disulfides stabilise this stretch: Cys31–Cys43 and Cys62–Cys148. Catalysis depends on His75, which acts as the Proton acceptor. Ca(2+)-binding residues include Asp76, Gly94, Asp96, and Ser98. His204 is a binding site for heme b. Positions 205, 222, 224, 227, and 229 each coordinate Ca(2+). The cysteines at positions 277 and 345 are disulfide-linked. Asn285 carries an N-linked (GlcNAc...) asparagine glycan. The segment covering 350-361 (FPTLTTLPGPET) has biased composition (low complexity). The segment at 350–372 (FPTLTTLPGPETSVQRIPPPPGA) is disordered.

Belongs to the peroxidase family. Ligninase subfamily. Heme b serves as cofactor. Requires Ca(2+) as cofactor.

The enzyme catalyses 1-(3,4-dimethoxyphenyl)-2-(2-methoxyphenoxy)propane-1,3-diol + H2O2 = 3,4-dimethoxybenzaldehyde + guaiacol + glycolaldehyde + H2O. The catalysed reaction is 2 (3,4-dimethoxyphenyl)methanol + H2O2 = 2 (3,4-dimethoxyphenyl)methanol radical + 2 H2O. The protein operates within secondary metabolite metabolism; lignin degradation. Its function is as follows. Depolymerization of lignin. Catalyzes the C(alpha)-C(beta) cleavage of the propyl side chains of lignin. The sequence is that of Ligninase LG3 (GLG3) from Phanerodontia chrysosporium (White-rot fungus).